The following is a 241-amino-acid chain: MKFFNYRRVPYAEIRAFSVHILTASGSFLAFLGVVAAAEHRFVDMFWWLGLALLVDGIDGPIARKVQVKEVLPNWSGDTLDNVIDYVTYVLLPAFALYQSGMIGEPWSFVAAGAIVVSSAIYYADMGMKTDEYFFSGFPVVWNMVVFTLFVIQASEVTASIVVFLSVILTFLPINFLHPVRVKRLRPLNLGIFLVWSVLGMYALLLHFETPPWVVVGVVATGLYLYVIGFILQIFPKLGRA.

Topologically, residues 1–15 are cytoplasmic; the sequence is MKFFNYRRVPYAEIR. A helical transmembrane segment spans residues 16–36; sequence AFSVHILTASGSFLAFLGVVA. Over 37–41 the chain is Periplasmic; it reads AAEHR. Residues 42 to 62 form a helical membrane-spanning segment; it reads FVDMFWWLGLALLVDGIDGPI. The Cytoplasmic segment spans residues 63–76; sequence ARKVQVKEVLPNWS. The chain crosses the membrane as a helical span at residues 77 to 97; sequence GDTLDNVIDYVTYVLLPAFAL. Over 98–100 the chain is Periplasmic; it reads YQS. The helical transmembrane segment at 101–121 threads the bilayer; it reads GMIGEPWSFVAAGAIVVSSAI. The Cytoplasmic portion of the chain corresponds to 122–133; the sequence is YYADMGMKTDEY. Residues 134–154 traverse the membrane as a helical segment; that stretch reads FFSGFPVVWNMVVFTLFVIQA. Residues 155–156 lie on the Periplasmic side of the membrane; it reads SE. The helical transmembrane segment at 157 to 177 threads the bilayer; the sequence is VTASIVVFLSVILTFLPINFL. The Cytoplasmic segment spans residues 178-187; that stretch reads HPVRVKRLRP. A helical membrane pass occupies residues 188–208; the sequence is LNLGIFLVWSVLGMYALLLHF. Topologically, residues 209-211 are periplasmic; it reads ETP. A helical transmembrane segment spans residues 212–232; the sequence is PWVVVGVVATGLYLYVIGFIL. The Cytoplasmic segment spans residues 233 to 241; sequence QIFPKLGRA.

The protein belongs to the CDP-alcohol phosphatidyltransferase class-I family. The cofactor is Mn(2+).

It localises to the cell inner membrane. It carries out the reaction a CDP-1,2-diacyl-sn-glycerol + choline = a 1,2-diacyl-sn-glycero-3-phosphocholine + CMP + H(+). With respect to regulation, activated by CDP-diacylglycerol especially in the presence of Triton X-100 (0.1% w/v) at concentrations where micelles are formed. Maximal activation by Triton X-100 at 0.2% w/v, but higher concentrations become inhibitory. Inhibited by EDTA and high concentrations of choline. Functionally, condenses choline with CDP-diglyceride to produce phosphatidylcholine and CMP. In Rhizobium meliloti (strain 1021) (Ensifer meliloti), this protein is Phosphatidylcholine synthase (pcs).